The sequence spans 533 residues: MAFANLRKVLISDSLDPCCRKILQDGGLQVVEKQNLSKEELIAELQDCEGLIVRSATKVTADVINAAEKLQVVGRAGTGVDNVDLEAATRKGILVMNTPNGNSLSAAELTCGMIMCLARQIPQATASMKDGKWERKKFMGTELNGKTLGILGLGRIGREVATRMQSFGMKTIGYDPIISPEVSASFGVQQLPLEEIWPLCDFITVHTPLLPSTTGLLNDNTFAQCKKGVRVVNCARGGIVDEGALLRALQSGQCAGAALDVFTEEPPRDRALVDHENVISCPHLGASTKEAQSRCGEEIAVQFVDMVKGKSLTGVVNAQALTSAFSPHTKPWIGLAEALGTLMRAWAGSPKGTIQVITQGTSLKNAGNCLSPAVIVGLLKEASKQADVNLVNAKLLVKEAGLNVTTSHSPAAPGEQGFGECLLAVALAGAPYQAVGLVQGTTPVLQGLNGAVFRPEVPLRRDLPLLLFRTQTSDPAMLPTMIGLLAEAGVRLLSYQTSLVSDGETWHVMGISSLLPSLEAWKQHVTEAFQFHF.

An N-acetylalanine modification is found at alanine 2. The residue at position 14 (serine 14) is a Phosphoserine. Lysine 21 is modified (N6-acetyllysine; alternate). Lysine 21 participates in a covalent cross-link: Glycyl lysine isopeptide (Lys-Gly) (interchain with G-Cter in SUMO1); alternate. Lysine 21 is covalently cross-linked (Glycyl lysine isopeptide (Lys-Gly) (interchain with G-Cter in SUMO2); alternate). At lysine 58 the chain carries N6-acetyllysine. NAD(+)-binding positions include threonine 78, 155-156 (RI), aspartate 175, threonine 207, 234-236 (CAR), and aspartate 260. Threonine 78 is subject to Phosphothreonine. Arginine 236 is a catalytic residue. Glutamate 265 is an active-site residue. Histidine 283 (proton donor) is an active-site residue. 283-286 (HLGA) contacts NAD(+).

It belongs to the D-isomer specific 2-hydroxyacid dehydrogenase family. As to quaternary structure, homotetramer.

The enzyme catalyses (2R)-3-phosphoglycerate + NAD(+) = 3-phosphooxypyruvate + NADH + H(+). It catalyses the reaction (R)-2-hydroxyglutarate + NAD(+) = 2-oxoglutarate + NADH + H(+). It carries out the reaction (S)-malate + NAD(+) = oxaloacetate + NADH + H(+). The protein operates within amino-acid biosynthesis; L-serine biosynthesis; L-serine from 3-phospho-D-glycerate: step 1/3. Functionally, catalyzes the reversible oxidation of 3-phospho-D-glycerate to 3-phosphonooxypyruvate, the first step of the phosphorylated L-serine biosynthesis pathway. Also catalyzes the reversible oxidation of 2-hydroxyglutarate to 2-oxoglutarate and the reversible oxidation of (S)-malate to oxaloacetate. The protein is D-3-phosphoglycerate dehydrogenase (PHGDH) of Homo sapiens (Human).